Here is a 56-residue protein sequence, read N- to C-terminus: Conotoxin Cal6.41b (56 aa).

The N-terminal stretch at Met1 to Thr23 is a signal peptide. 3 disulfides stabilise this stretch: Cys27–Cys41, Cys33–Cys50, and Cys40–Cys54.

Expressed by the venom duct.

It localises to the secreted. Probable neurotoxin. The sequence is that of Conotoxin Cal6.41b from Californiconus californicus (California cone).